Reading from the N-terminus, the 387-residue chain is MEFEFFFQIALILLSTKLAGDLSVRLGQPSVLGKLIVGIVIGPAVLGWIENSELLTQLSNVGVILLMFMAGLETDLEELNANRNSSLAVALGGIILPFVGGYVSGLVMGMEQGNAVFLGLLLCATSVSISVQTLRDLGKMKTRESTTMLGAAVFDDILVVILLAFAMSFLGTDDVNLTMVILKKVVFFASIILIGWKGVPAIMRWLSPLRVSESIVSAALIICFSFAYFGELLGIAGIIGAFAAGIAISQTNYKHEVEKKVEPIAYAMFVPVFFVSIGMNITFDGIGNQIWFILALTVIAVLTKLIGCGFGARMTGFDAKSSAIIGAGMVSRGEVALIIAGTGLSSGLLAQDYFTAIVIVVILTTMITPPMLKYTFGAKDKAMKASK.

11 consecutive transmembrane segments (helical) span residues 29 to 49 (PSVL…LGWI), 54 to 74 (LLTQ…GLET), 87 to 107 (LAVA…SGLV), 114 to 134 (NAVF…VQTL), 149 to 169 (LGAA…AMSF), 175 to 195 (VNLT…ILIG), 219 to 239 (ALII…AGII), 263 to 283 (PIAY…NITF), 290 to 310 (IWFI…GCGF), 324 to 344 (IIGA…GTGL), and 347 to 367 (GLLA…TTMI).

It belongs to the monovalent cation:proton antiporter 2 (CPA2) transporter (TC 2.A.37) family.

Its subcellular location is the membrane. Functionally, na(+)/H(+) antiporter that extrudes sodium in exchange for external protons. Can also use potassium as a coupling ion, without completely replacing H(+). This Na(+)/H(+)-K(+) antiport is much more rapid than Na(+)/H(+) antiport. Can also extrude lithium. Important for the inosine-dependent germination of spores. In Bacillus cereus, this protein is Na(+)/H(+)-K(+) antiporter GerN (gerN).